Consider the following 441-residue polypeptide: Cytochrome P450 monooxygenase cpsC (441 aa).

The interval 175–195 (STTSQARKDETTATQQAGMEQ) is disordered. Polar residues predominate over residues 186-195 (TATQQAGMEQ). C377 serves as a coordination point for heme.

This sequence belongs to the cytochrome P450 family. Requires heme as cofactor.

It catalyses the reaction campesine D + reduced [NADPH--hemoprotein reductase] + O2 = campesine G + oxidized [NADPH--hemoprotein reductase] + 2 H2O + H(+). It functions in the pathway alkaloid biosynthesis. In terms of biological role, cytochrome P450 monooxygenase; part of the gene cluster that mediates the biosynthesis of campesine G, a dimeric indole piperazine alkaloid that shows good insecticidal activity Galleria mellonella. Within the pathway, cpsC catalyzes regioselective dehydrogenation reaction towards C2-N1 of the (2H)-indole ring of campesine D to yield the final product, campesine G. The non-canonical non-ribosomal peptide synthetase cpsA catalyzes the first steps of the pathway by producing L-tryptophanal and L-valinal from their respective amino-acids. These products condensate spontaneously to form trypyl-valyl pyrazine also known as didehydrocampesine A. The NmrA-like family domain-containing oxidoreductase cpsB is the next enzyme in cps pathway and reduces the unstable didehydrocampesine A to campesine A. The methyltransferase cpsF and the acetyltransferase cpsE both recognize N13 of piperazine ring to carry out methylation and acetylation of campesine A to produce campesine C and B, respectively. The cytochrome P450 monooxygenase cpsD then acts as a dimerase that catalyzes oxidative heterocoupling between campesine B and C to produce heterodimers with unexpected 6/5/6/6/6/6/5/6 eight-ring scaffold called campesine D. Finally,the cytochrome P450 monooxygenase cpsC is a regioselective dehydrogenase that catalyzes dehydrogenation reaction towards C2-N1 to produce campesine G. This chain is Cytochrome P450 monooxygenase cpsC, found in Aspergillus campestris (strain IBT 28561).